The primary structure comprises 723 residues: MSAISLIQPDRDLFSWPQYWAACFGPAPFLPMSRDEMDQLGWDSCDIILVTGDAYVDHPSFGMAICGRMLEAQGFRVGIIAQPDWNSKDDFMRLGKPNLFFGVTAGNMDSMINRYTADRKLRHDDAYTPDNVAGKRPDRATLVYTQRCKEAWKDVPVILGGIEASLRRTAHYDYWSDTVRRSVLVDSKADMLMFGNGERPLVEVAHRLAMGETIDQIRDVRNTAIMVKEALPGWSGVDSTRLDTPGKIDPIPHPYGEDLPCADNKPVAPKKQEAKAITVQPPRPKPWEKTYILLPSFEKVKGDKVLYAHASRILHHETNPGCARALMQKHGDRYVWINPPAIPLSTEEMDSVFALPYQRVPHPAYGNARIPAYEMIRFSINIMRGCFGGCSFCSITEHEGRIIQSRSEDSIINEIEAIRDTVPGFTGVISDLGGPTANMYMLRCKSPRAEQTCRRLSCVYPDICPHMDTDHTPTINLYRRARELKGIKKILIASGVRYDIAVEDPRYIKELASHHVGGYLKIAPEHTEEGPLSKMMKPGMGSYDRFKELFDLYSKQAGKEQYLIPYFISAHPGTRDEDMVNLALWLKRHRFRLDQVQNFYPSPLANSTTMYYTGKNPLGKIGYKSEDVVVPKGDRQRRLHKALLRYHDPANWPLIRQALEAMGKKHLIGGRRECLVPAPTIEEMREARRQNRNTRPALTKHTPVEHQRQGLAANKKRGKGAGR.

Residues 372–650 (AYEMIRFSIN…KALLRYHDPA (279 aa)) form the Radical SAM core domain. [4Fe-4S] cluster is bound by residues C386, C390, and C393. The tract at residues 686–723 (EARRQNRNTRPALTKHTPVEHQRQGLAANKKRGKGAGR) is disordered. Residues 714–723 (NKKRGKGAGR) show a composition bias toward basic residues.

Belongs to the UPF0313 family. [4Fe-4S] cluster serves as cofactor.

This is UPF0313 protein YgiQ from Salmonella typhimurium (strain LT2 / SGSC1412 / ATCC 700720).